The chain runs to 37 residues: Mating pheromone Er-22 (37 aa).

Intrachain disulfides connect Cys3–Cys18, Cys10–Cys32, and Cys15–Cys24.

It localises to the secreted. Its function is as follows. Mating ciliate pheromones (or gamones) are diffusible extracellular communication signals that distinguish different intraspecific classes of cells commonly referred to as 'mating types'. They prepare the latter for conjugation by changing their cell surface properties. The protein is Mating pheromone Er-22 (MAT22) of Euplotes raikovi.